The chain runs to 79 residues: Cell division protein ZapB (79 aa).

Residues 4–78 are a coiled coil; that stretch reads EVFEKLESKV…LRALLGKMEE (75 aa).

Belongs to the ZapB family. As to quaternary structure, homodimer. The ends of the coiled-coil dimer bind to each other, forming polymers. Interacts with FtsZ.

It localises to the cytoplasm. Functionally, non-essential, abundant cell division factor that is required for proper Z-ring formation. It is recruited early to the divisome by direct interaction with FtsZ, stimulating Z-ring assembly and thereby promoting cell division earlier in the cell cycle. Its recruitment to the Z-ring requires functional FtsA or ZipA. This is Cell division protein ZapB from Serratia proteamaculans (strain 568).